Here is an 88-residue protein sequence, read N- to C-terminus: Small ribosomal subunit protein bS20 (88 aa).

This sequence belongs to the bacterial ribosomal protein bS20 family.

Binds directly to 16S ribosomal RNA. In Rhodopseudomonas palustris (strain BisB18), this protein is Small ribosomal subunit protein bS20.